The following is a 393-amino-acid chain: NAD(P)H-quinone oxidoreductase subunit H, chloroplastic (393 aa).

Belongs to the complex I 49 kDa subunit family. In terms of assembly, NDH is composed of at least 16 different subunits, 5 of which are encoded in the nucleus.

The protein localises to the plastid. The protein resides in the chloroplast thylakoid membrane. It carries out the reaction a plastoquinone + NADH + (n+1) H(+)(in) = a plastoquinol + NAD(+) + n H(+)(out). It catalyses the reaction a plastoquinone + NADPH + (n+1) H(+)(in) = a plastoquinol + NADP(+) + n H(+)(out). Functionally, NDH shuttles electrons from NAD(P)H:plastoquinone, via FMN and iron-sulfur (Fe-S) centers, to quinones in the photosynthetic chain and possibly in a chloroplast respiratory chain. The immediate electron acceptor for the enzyme in this species is believed to be plastoquinone. Couples the redox reaction to proton translocation, and thus conserves the redox energy in a proton gradient. The polypeptide is NAD(P)H-quinone oxidoreductase subunit H, chloroplastic (Olimarabidopsis pumila (Dwarf rocket)).